A 122-amino-acid polypeptide reads, in one-letter code: MSVPTMAWMMLLLGLLAYGSGVDSQTVVTQEPSFSVSPGGTVTLTCGLSSGSVSTSYYPSWYQQTPGQAPRTLIYSTNTRSSGVPDRFSGSILGNKAALTITGAQADDESDYYCVLYMGSGI.

The N-terminal stretch at 1–24 (MSVPTMAWMMLLLGLLAYGSGVDS) is a signal peptide. The tract at residues 25-49 (QTVVTQEPSFSVSPGGTVTLTCGLS) is framework-1. One can recognise an Ig-like domain in the interval 25-122 (QTVVTQEPSF…YCVLYMGSGI (98 aa)). Residues Cys-46 and Cys-114 are joined by a disulfide bond. Positions 50–58 (SGSVSTSYY) are complementarity-determining-1. The interval 59–75 (PSWYQQTPGQAPRTLIY) is framework-2. The interval 76–78 (STN) is complementarity-determining-2. A framework-3 region spans residues 79-114 (TRSSGVPDRFSGSILGNKAALTITGAQADDESDYYC). The complementarity-determining-3 stretch occupies residues 115–122 (VLYMGSGI).

As to quaternary structure, immunoglobulins are composed of two identical heavy chains and two identical light chains; disulfide-linked.

Its subcellular location is the secreted. The protein localises to the cell membrane. Functionally, v region of the variable domain of immunoglobulin light chains that participates in the antigen recognition. Immunoglobulins, also known as antibodies, are membrane-bound or secreted glycoproteins produced by B lymphocytes. In the recognition phase of humoral immunity, the membrane-bound immunoglobulins serve as receptors which, upon binding of a specific antigen, trigger the clonal expansion and differentiation of B lymphocytes into immunoglobulins-secreting plasma cells. Secreted immunoglobulins mediate the effector phase of humoral immunity, which results in the elimination of bound antigens. The antigen binding site is formed by the variable domain of one heavy chain, together with that of its associated light chain. Thus, each immunoglobulin has two antigen binding sites with remarkable affinity for a particular antigen. The variable domains are assembled by a process called V-(D)-J rearrangement and can then be subjected to somatic hypermutations which, after exposure to antigen and selection, allow affinity maturation for a particular antigen. The polypeptide is Immunoglobulin lambda variable 8-61 (Homo sapiens (Human)).